Reading from the N-terminus, the 118-residue chain is Hisactophilin-1 (118 aa).

Residue glycine 2 is the site of N-myristoyl glycine attachment. The contains several HHXH repeats stretch occupies residues 8–109; it reads SHHGHFLSAE…HVSTKEHHDH (102 aa). 2 repeat units span residues 34-46 and 74-86. Positions 34-86 are 2 X 13 AA approximate repeats; that stretch reads FHVENHGGKVALKTHCGKYLSIGDHKQVYLSHHLHGDHSLFHLEHHGGKVSIK.

This sequence belongs to the hisactophilin family. Homodimer or heterodimer of hatA and hatB, linked by a disulfide bond. In terms of processing, phosphorylated.

It localises to the cytoplasm. It is found in the cell membrane. Functionally, may act as an intracellular pH sensor that links chemotactic signals to responses in the microfilament system of the cells by nucleating actin polymerization or stabilizing the filaments. This chain is Hisactophilin-1 (hatA), found in Dictyostelium discoideum (Social amoeba).